The chain runs to 376 residues: UDP-N-acetylglucosamine 2-epimerase (376 aa).

Substrate is bound by residues arginine 10, lysine 15, aspartate 95, glutamate 117, histidine 213, glutamine 271, phenylalanine 276, 290-292 (SGG), glutamate 296, and arginine 313.

This sequence belongs to the UDP-N-acetylglucosamine 2-epimerase family. As to quaternary structure, homodimer.

It localises to the cytoplasm. It catalyses the reaction UDP-N-acetyl-alpha-D-glucosamine = UDP-N-acetyl-alpha-D-mannosamine. Its pathway is bacterial outer membrane biogenesis; enterobacterial common antigen biosynthesis. Functionally, catalyzes the reversible epimerization at C-2 of UDP-N-acetylglucosamine (UDP-GlcNAc) and thereby provides bacteria with UDP-N-acetylmannosamine (UDP-ManNAc), the activated donor of ManNAc residues. The protein is UDP-N-acetylglucosamine 2-epimerase of Yersinia pestis.